Consider the following 864-residue polypeptide: N-alpha-acetyltransferase 16, NatA auxiliary subunit (864 aa).

7 TPR repeats span residues 46–79, 80–113, 148–184, 224–257, 374–407, 409–441, and 485–518; these read GETL…DVKS, HVCW…DKDN, RASW…PPNK, LLVE…NAEN, LWVQ…TPTL, ELFY…DTAD, and MWFQ…FFEI. The segment at 603–638 is disordered; sequence QKKAKLEEERKHAERERQQKNQKKKRDEEEEEASGL. The segment covering 606–621 has biased composition (basic and acidic residues); it reads AKLEEERKHAERERQQ.

In terms of assembly, component of the N-terminal acetyltransferase A (NatA) complex composed of NAA10 and NAA16.

Functionally, auxillary subunit of the N-terminal acetyltransferase A (NatA) complex which displays alpha (N-terminal) acetyltransferase activity. In Homo sapiens (Human), this protein is N-alpha-acetyltransferase 16, NatA auxiliary subunit (NAA16).